Here is a 298-residue protein sequence, read N- to C-terminus: Protein RKD2 (298 aa).

Composition is skewed to basic and acidic residues over residues 1–10 (MADHTTKEQK) and 81–102 (EQNR…VKET). Disordered stretches follow at residues 1 to 22 (MADH…PSFD) and 73 to 112 (SSAS…NERH). The 83-residue stretch at 121–203 (SDITTYTTSS…KMEGEENAEK (83 aa)) folds into the RWP-RK domain. Residues 188–222 (NVKELQKMEGEENAEKLQDALEMLEKEKRTIEDLP) adopt a coiled-coil conformation. Residues 241–279 (NHKRKKKRSLKSDQSQVPSCSSSGSVPSDESVDEAGMES) form a disordered region. Over residues 252-269 (SDQSQVPSCSSSGSVPSD) the composition is skewed to low complexity. The span at 270-279 (ESVDEAGMES) shows a compositional bias: acidic residues.

The protein resides in the nucleus. Functionally, putative transcription factor. This Arabidopsis thaliana (Mouse-ear cress) protein is Protein RKD2 (RKD2).